A 160-amino-acid polypeptide reads, in one-letter code: Ribosomal RNA large subunit methyltransferase H (160 aa).

Positions 76 and 108 each coordinate S-adenosyl-L-methionine.

The protein belongs to the RNA methyltransferase RlmH family. Homodimer.

The protein resides in the cytoplasm. The enzyme catalyses pseudouridine(1915) in 23S rRNA + S-adenosyl-L-methionine = N(3)-methylpseudouridine(1915) in 23S rRNA + S-adenosyl-L-homocysteine + H(+). Functionally, specifically methylates the pseudouridine at position 1915 (m3Psi1915) in 23S rRNA. This chain is Ribosomal RNA large subunit methyltransferase H, found in Rhodopseudomonas palustris (strain ATCC BAA-98 / CGA009).